We begin with the raw amino-acid sequence, 45 residues long: Mu-conotoxin-like Cal 12.1.2c (45 aa).

4 cysteine pairs are disulfide-bonded: C3–C16, C11–C28, C18–C33, and C27–C39. P23 is subject to 4-hydroxyproline. 6'-bromotryptophan occurs at positions 37 and 38. 4-hydroxyproline is present on P40. A 6'-bromotryptophan modification is found at W44.

In terms of tissue distribution, expressed by the venom duct.

The protein resides in the secreted. Mu-conotoxins block voltage-gated sodium channels. This toxin reversibly blocks voltage-gated sodium channel in cephalopods, with no alteration in the voltage dependence of sodium conductance or on the kinetics of inactivation. This Californiconus californicus (California cone) protein is Mu-conotoxin-like Cal 12.1.2c.